The following is a 303-amino-acid chain: Ribosomal protein L11 methyltransferase (303 aa).

Positions 146, 167, 189, and 236 each coordinate S-adenosyl-L-methionine.

This sequence belongs to the methyltransferase superfamily. PrmA family.

The protein localises to the cytoplasm. It carries out the reaction L-lysyl-[protein] + 3 S-adenosyl-L-methionine = N(6),N(6),N(6)-trimethyl-L-lysyl-[protein] + 3 S-adenosyl-L-homocysteine + 3 H(+). Functionally, methylates ribosomal protein L11. In Acinetobacter baylyi (strain ATCC 33305 / BD413 / ADP1), this protein is Ribosomal protein L11 methyltransferase.